The sequence spans 1766 residues: E3 ubiquitin-protein ligase listerin (1766 aa).

A compositionally biased stretch (basic residues) spans 1 to 11; it reads MGGKNKQRTKG. The interval 1–20 is disordered; sequence MGGKNKQRTKGNVRPSSSGR. HEAT repeat units lie at residues 100–138, 193–231, 292–329, 335–372, and 512–549; these read KGVLPYWPRIYCKISLDHDRRVREATQQSFEQLILKVKK, VLQDHLLKETPDTLSDPQTVPEEEREAKFFRILTCSLLA, AEAPRVCPAVLLSIDDSDAVVCPALWEAVLHAIATIED, NARKGVLPKLWTVLREGGRGLATVIYPNILPFISKVPP, and EKTLFAISDMLEVLQNPKTATKPNNRKSLKVKFSDEDE. Positions 529-567 are disordered; that stretch reads KTATKPNNRKSLKVKFSDEDESERNTENGKITEVRSNSD. A compositionally biased stretch (basic and acidic residues) spans 551-566; the sequence is ERNTENGKITEVRSNS. HEAT repeat units follow at residues 606 to 644, 672 to 710, 916 to 953, 1184 to 1227, 1314 to 1355, and 1406 to 1447; these read EQHLKFLSALLNFFSSNRVFQVLLEQGSNAGCPPAESQE, KDMHFLVDILYSVLNCCNSDDERKVILDDLTKMDLKWIV, QVLISAVSDLLSTLLEADRQSGCLVGAYVEHVMPNRTE, HLLP…MIRY, GIHN…YISK, and SKLM…TQEL. An RING-type zinc finger spans residues 1715 to 1762; it reads CMICFSVIHGSNYSLPKKACRTCKKKFHSACLYKWFTSSNKSTCPLCR.

It belongs to the LTN1 family. As to quaternary structure, component of the ribosome quality control complex (RQC), composed of at least the E3 ubiquitin ligase LTN1 and NEMF associated with the 60S ribosomal subunit. The complex probably also contains TCF25 as well as VCP/p97 and its ubiquitin-binding cofactors.

The protein localises to the cytoplasm. Its subcellular location is the cytosol. It carries out the reaction S-ubiquitinyl-[E2 ubiquitin-conjugating enzyme]-L-cysteine + [acceptor protein]-L-lysine = [E2 ubiquitin-conjugating enzyme]-L-cysteine + N(6)-ubiquitinyl-[acceptor protein]-L-lysine.. It participates in protein modification; protein ubiquitination. In terms of biological role, E3 ubiquitin-protein ligase component of the ribosome quality control complex (RQC), a ribosome-associated complex that mediates ubiquitination and extraction of incompletely synthesized nascent chains for proteasomal degradation. Within the RQC complex, LTN1 is recruited to stalled 60S ribosomal subunits by NEMF and mediates ubiquitination of stalled nascent chains. Ubiquitination leads to VCP/p97 recruitment for extraction and degradation of the incomplete translation product. This Gallus gallus (Chicken) protein is E3 ubiquitin-protein ligase listerin (LTN1).